The primary structure comprises 329 residues: Quinone oxidoreductase (329 aa).

Residue alanine 2 is modified to N-acetylalanine. Lysine 23 carries the post-translational modification N6-acetyllysine. NADP(+)-binding positions include tyrosine 53, 158–161, glycine 181, histidine 200, asparagine 229, 246–249, and 269–271; these read SGGV, VGSR, and VTL. Phosphoserine is present on serine 248. An N6-succinyllysine modification is found at lysine 296.

Belongs to the zinc-containing alcohol dehydrogenase family. Quinone oxidoreductase subfamily. In terms of assembly, homotetramer. In terms of tissue distribution, only very low amounts in the lens.

It localises to the cytoplasm. It carries out the reaction 2 a quinone + NADPH + H(+) = 2 a 1,4-benzosemiquinone + NADP(+). In terms of biological role, does not have alcohol dehydrogenase activity. Binds NADP and acts through a one-electron transfer process. Orthoquinones, such as 1,2-naphthoquinone or 9,10-phenanthrenequinone, are the best substrates (in vitro). May act in the detoxification of xenobiotics. Interacts with (AU)-rich elements (ARE) in the 3'-UTR of target mRNA species. Enhances the stability of mRNA coding for BCL2. NADPH binding interferes with mRNA binding. This is Quinone oxidoreductase (CRYZ) from Homo sapiens (Human).